The following is a 692-amino-acid chain: MNLRSVFTVEQQRILQRYYENGMTNQSKNCFQLILQCAQETKLDFSVVRTWVGNKRRKMSSKSCESGAAGTVSGTSLAAPDITVRNVVNIARPSSQQSSWTSANNDVIVTGIYSPVSSSSKQGTTKHTNTQITEAHKIPIQKAANKNDTELQLHIPVQRQVAHCKNASVLLGEKTIILSRQTSVLNAGNSVYNHTKKSYGSSPVQASEMTVPQKPSVCQRPCKIEPVGIQRSYKPEHAGLASHNLCGQKPTIRDPCCRTQNLEIREVFSLAVSDYPQRILGGNSTQKPASAEGTCLSIAMETGDAEDEYAREEELASMGAQITSYSRFYESGNSLRAENQSTNLPGPGRNLPNSQMVNIRDLSDNVLYQTRDYHLTPRTSLHTASSTMYSNTNPSRSNFSPHFVSSNQLRLSQNQNNYQISGNLSVPWITGCSRKRALQDRTQFSDRDLATLKKYWDNGMTSLGSVCREKIEAVAIELNVDCEIVRTWIGNRRRKYRLMGIEVPPPRGGPADFSEQPESGSLSALTPGEEAGPEVGEDNDRNDEVSICLSEASSQEESNELIPNETRAHKDEEHQAVSADNVKIEIIDDEESDMISNSEVEQENSLLDYKNEEVRFIENELEIQKQKYFKLQSFVRNLILAMKADDKDQQQALLSDLPPELEEMDCSHASPDPDDTSLSVSSLSEKNASDSL.

The homeobox 1 DNA-binding region spans 3 to 63; the sequence is LRSVFTVEQQ…NKRRKMSSKS (61 aa). Residues 117 to 133 show a composition bias toward polar residues; that stretch reads SSSSKQGTTKHTNTQIT. A disordered region spans residues 117-136; that stretch reads SSSSKQGTTKHTNTQITEAH. Glycyl lysine isopeptide (Lys-Gly) (interchain with G-Cter in SUMO2) cross-links involve residues K137, K142, K146, K165, K174, K196, K214, K223, and K234. Residues 437–500 constitute a DNA-binding region (homeobox 2); that stretch reads ALQDRTQFSD…NRRRKYRLMG (64 aa). Disordered stretches follow at residues 505–541 and 647–692; these read PPRGGPADFSEQPESGSLSALTPGEEAGPEVGEDNDR and KDQQ…SDSL. Polar residues predominate over residues 676-692; it reads TSLSVSSLSEKNASDSL.

The protein resides in the nucleus. The sequence is that of Highly divergent homeobox (Hdx) from Mus musculus (Mouse).